The sequence spans 165 residues: Large ribosomal subunit protein uL10 (165 aa).

It belongs to the universal ribosomal protein uL10 family. Part of the ribosomal stalk of the 50S ribosomal subunit. The N-terminus interacts with L11 and the large rRNA to form the base of the stalk. The C-terminus forms an elongated spine to which L12 dimers bind in a sequential fashion forming a multimeric L10(L12)X complex.

Its function is as follows. Forms part of the ribosomal stalk, playing a central role in the interaction of the ribosome with GTP-bound translation factors. The polypeptide is Large ribosomal subunit protein uL10 (Burkholderia multivorans (strain ATCC 17616 / 249)).